Consider the following 175-residue polypeptide: Nucleoside triphosphate/diphosphate phosphatase (175 aa).

Arg-23 (proton donor) is an active-site residue. Asn-87, Asp-103, Asp-105, Asp-107, Asp-120, and Glu-123 together coordinate Mg(2+).

It belongs to the Ntdp family. Mg(2+) serves as cofactor.

It carries out the reaction a ribonucleoside 5'-triphosphate + H2O = a ribonucleoside 5'-diphosphate + phosphate + H(+). The enzyme catalyses a ribonucleoside 5'-diphosphate + H2O = a ribonucleoside 5'-phosphate + phosphate + H(+). Has nucleoside phosphatase activity towards nucleoside triphosphates and nucleoside diphosphates. This chain is Nucleoside triphosphate/diphosphate phosphatase, found in Listeria monocytogenes serotype 4b (strain CLIP80459).